Reading from the N-terminus, the 580-residue chain is Small conductance calcium-activated potassium channel protein 2 (580 aa).

2 disordered regions span residues 1-68 (MSSC…VSKP) and 88-116 (GGGG…KKNQ). A compositionally biased stretch (low complexity) spans 48 to 61 (SSPSAAAAASSSAP). The span at 88–104 (GGGGGGGGGGGGSGHGS) shows a compositional bias: gly residues. Residues 140–160 (LIFGMFGIVVMVIETELSWGA) form a helical membrane-spanning segment. Tyrosine 161 bears the Phosphotyrosine mark. The chain crosses the membrane as a helical span at residues 169–189 (LALKCLISLSTIILLGLIIVY). The chain crosses the membrane as a helical span at residues 215–235 (IFFICLEILVCAIHPIPGNYT). Residues 257–277 (IILSIPMFLRLYLIARVMLLH) form a helical membrane-spanning segment. A helical membrane pass occupies residues 306-326 (LMTICPGTVLLVFSISLWIIA). The segment at residues 346-366 (FLGAMWLISITFLSIGYGDMV) is an intramembrane region (pore-forming). The helical transmembrane segment at 375–395 (VCLLTGIMGAGCTALVVAVVA) threads the bilayer. The segment at 413–489 (DTQLTKRVKN…LVDLAKTQNI (77 aa)) is calmodulin-binding. Positions 551-560 (HVTYNAERSR) are enriched in basic and acidic residues. Positions 551 to 580 (HVTYNAERSRSSSRRRRSSSTAPPTSSESS) are disordered. Over residues 569-580 (SSTAPPTSSESS) the composition is skewed to low complexity.

This sequence belongs to the potassium channel KCNN family. KCa2.2/KCNN2 subfamily. As to quaternary structure, homodimer. Heteromultimer with KCNN1 and KCNN3. The complex is composed of 4 channel subunits each of which binds to a calmodulin subunit which regulates the channel activity through calcium-binding. Interacts (via N-terminal domain) with MPP2. As to expression, brain.

Its subcellular location is the membrane. The protein resides in the cytoplasm. The protein localises to the myofibril. It is found in the sarcomere. It localises to the z line. It catalyses the reaction K(+)(in) = K(+)(out). Inhibited by bee venom neurotoxin apamin. Inhibited by UCL 1684 and tetraethylammonium (TEA). Its function is as follows. Small conductance calcium-activated potassium channel that mediates the voltage-independent transmembrane transfer of potassium across the cell membrane through a constitutive interaction with calmodulin which binds the intracellular calcium allowing its opening. The current is characterized by a voltage-independent activation, an intracellular calcium concentration increase-dependent activation and a single-channel conductance of about 3 picosiemens. Also presents an inwardly rectifying current, thus reducing its already small outward conductance of potassium ions, which is particularly the case when the membrane potential displays positive values, above + 20 mV. The inward rectification could be due to a blockade of the outward current by intracellular divalent cations such as calcium and magnesium and could also be due to an intrinsic property of the channel pore, independent of intracellular divalent ions. There are three positively charged amino acids in the S6 transmembrane domain, close to the pore, that collectively control the conductance and rectification through an electrostatic mechanism. Additionally, electrostatic contributions from these residues also play an important role in determining the intrinsic open probability of the channel in the absence of calcium, affecting the apparent calcium affinity for activation. Forms an heteromeric complex with calmodulin, which is constitutively associated in a calcium-independent manner. Channel opening is triggered when calcium binds the calmodulin resulting in a rotary movement leading to the formation of the dimeric complex to open the gate. Plays a role in the repolarization phase of cardiac action potential. This is Small conductance calcium-activated potassium channel protein 2 from Rattus norvegicus (Rat).